The primary structure comprises 150 residues: Lipoprotein signal peptidase (150 aa).

The next 3 helical transmembrane spans lie at 5–25, 59–79, and 82–102; these read LSLV…NWVV, QQWF…WFLW, and MGQN…LGNF. Active-site residues include Asp-113 and Asp-129. The helical transmembrane segment at 124-144 threads the bilayer; the sequence is IFNIADILLSVGFVVLFIAIL.

Belongs to the peptidase A8 family.

Its subcellular location is the cell membrane. It carries out the reaction Release of signal peptides from bacterial membrane prolipoproteins. Hydrolyzes -Xaa-Yaa-Zaa-|-(S,diacylglyceryl)Cys-, in which Xaa is hydrophobic (preferably Leu), and Yaa (Ala or Ser) and Zaa (Gly or Ala) have small, neutral side chains.. It functions in the pathway protein modification; lipoprotein biosynthesis (signal peptide cleavage). This protein specifically catalyzes the removal of signal peptides from prolipoproteins. This chain is Lipoprotein signal peptidase, found in Lactococcus lactis subsp. cremoris (strain SK11).